A 529-amino-acid chain; its full sequence is Bifunctional purine biosynthesis protein PurH (529 aa).

An MGS-like domain is found at 1–148 (MQQRRPVRRA…KNHKDVAIVV (148 aa)).

This sequence belongs to the PurH family.

The enzyme catalyses (6R)-10-formyltetrahydrofolate + 5-amino-1-(5-phospho-beta-D-ribosyl)imidazole-4-carboxamide = 5-formamido-1-(5-phospho-D-ribosyl)imidazole-4-carboxamide + (6S)-5,6,7,8-tetrahydrofolate. It carries out the reaction IMP + H2O = 5-formamido-1-(5-phospho-D-ribosyl)imidazole-4-carboxamide. The protein operates within purine metabolism; IMP biosynthesis via de novo pathway; 5-formamido-1-(5-phospho-D-ribosyl)imidazole-4-carboxamide from 5-amino-1-(5-phospho-D-ribosyl)imidazole-4-carboxamide (10-formyl THF route): step 1/1. It functions in the pathway purine metabolism; IMP biosynthesis via de novo pathway; IMP from 5-formamido-1-(5-phospho-D-ribosyl)imidazole-4-carboxamide: step 1/1. The chain is Bifunctional purine biosynthesis protein PurH from Salmonella paratyphi C (strain RKS4594).